The chain runs to 501 residues: NAD(P)H-quinone oxidoreductase chain 4, chloroplastic (501 aa).

14 helical membrane-spanning segments follow: residues 5-25 (FPWL…IFFL), 38-58 (TCIC…HFQL), 88-108 (IGPI…AWPV), 114-131 (LFYL…GLFS), 135-155 (LLLF…LLSM), 168-188 (FILY…GMGL), 209-229 (ALEI…SPII), 243-263 (HYST…YGLI), 273-293 (AHSL…IYAA), 306-326 (IACS…SITD), 331-351 (GAIL…FLSG), 387-407 (LALP…GIIT), 417-437 (ILIT…LLSM), and 464-484 (FVSI…DCVF).

The protein belongs to the complex I subunit 4 family.

The protein resides in the plastid. It localises to the chloroplast thylakoid membrane. The catalysed reaction is a plastoquinone + NADH + (n+1) H(+)(in) = a plastoquinol + NAD(+) + n H(+)(out). It carries out the reaction a plastoquinone + NADPH + (n+1) H(+)(in) = a plastoquinol + NADP(+) + n H(+)(out). The chain is NAD(P)H-quinone oxidoreductase chain 4, chloroplastic from Dioscorea elephantipes (Elephant's foot yam).